Reading from the N-terminus, the 410-residue chain is MALEISRLFPQNIQELPSLSGVRIATAEAGIKYKDRTDLLFIVFDKSASVAGVFTRSKCPSAPVEHCRISLPHGVARGVVVNSGNANAFTGRKGKQTVDTIICAAANALKVKKNEIFIASTGVIGEPMEASSIVNLLPSMAKTAKEGNWLEAAKAIMTTDTFPKLATRRFDCGGETITINGIAKGAGMIAPDMATMLSFVVSDAAISSQMLQSMLSEAVQESFNSITVDSDTSTSDTLMMFATGKESFPCITSKTDPRYEVFSKQLRALLHELALQVVCDGEGARHLIEVHVIGATTDNTAKIIALSIANSPLVKTAIAGEDANWGRVVMAVGKAGVEVDRDLLTIWFGEHRLAINGERDPEYCEEKIGAYMQNKHITIRVDIGLGTGKATVWSCDLTKEYVMINGDYRS.

Residues threonine 158, lysine 184, threonine 195, glutamate 282, asparagine 405, and serine 410 each coordinate substrate. Threonine 195 serves as the catalytic Nucleophile.

The protein belongs to the ArgJ family. As to quaternary structure, heterotetramer of two alpha and two beta chains.

It is found in the cytoplasm. It catalyses the reaction N(2)-acetyl-L-ornithine + L-glutamate = N-acetyl-L-glutamate + L-ornithine. The enzyme catalyses L-glutamate + acetyl-CoA = N-acetyl-L-glutamate + CoA + H(+). The protein operates within amino-acid biosynthesis; L-arginine biosynthesis; L-ornithine and N-acetyl-L-glutamate from L-glutamate and N(2)-acetyl-L-ornithine (cyclic): step 1/1. It participates in amino-acid biosynthesis; L-arginine biosynthesis; N(2)-acetyl-L-ornithine from L-glutamate: step 1/4. Its function is as follows. Catalyzes two activities which are involved in the cyclic version of arginine biosynthesis: the synthesis of N-acetylglutamate from glutamate and acetyl-CoA as the acetyl donor, and of ornithine by transacetylation between N(2)-acetylornithine and glutamate. The sequence is that of Arginine biosynthesis bifunctional protein ArgJ from Bartonella henselae (strain ATCC 49882 / DSM 28221 / CCUG 30454 / Houston 1) (Rochalimaea henselae).